The chain runs to 73 residues: UPF0057 membrane protein At4g30650 (73 aa).

Helical transmembrane passes span 4–24 (NMEVFCEILIAILLPPLGVCL) and 37–57 (LVLTILGYIPGIIYALYVIVF).

It belongs to the UPF0057 (PMP3) family.

The protein localises to the membrane. This Arabidopsis thaliana (Mouse-ear cress) protein is UPF0057 membrane protein At4g30650.